Here is a 24-residue protein sequence, read N- to C-terminus: Brevinin-1Pe (24 aa).

A disulfide bond links C18 and C24.

In terms of tissue distribution, expressed by the skin glands.

It localises to the secreted. Its function is as follows. Antibacterial activity against Gram-positive bacterium S.aureus and Gram-negative bacterium E.coli. Has activity against C.albicans. This Lithobates pipiens (Northern leopard frog) protein is Brevinin-1Pe.